The following is a 221-amino-acid chain: Zingipain-1 (221 aa).

3 disulfides stabilise this stretch: Cys24–Cys65, Cys58–Cys98, and Cys155–Cys206. Residue Cys27 is part of the active site. Asn95 and Asn156 each carry an N-linked (GlcNAc...) asparagine glycan. Catalysis depends on residues His161 and Asn181.

It belongs to the peptidase C1 family.

It catalyses the reaction Preferential cleavage of peptides with a proline residue at the P2 position.. Functionally, cysteine proteinase with a high level of diversity in substrate specificity, an amino acid bearing a proline residue at the P2 position is preferred. The chain is Zingipain-1 from Zingiber officinale (Ginger).